Consider the following 704-residue polypeptide: Boron transporter 1 (704 aa).

Over 1-35 the chain is Cytoplasmic; that stretch reads MEETFVPFEGIKNDLKGRLMCYKQDWTGGFKAGFR. Residues 36–56 traverse the membrane as a helical segment; it reads ILAPTTYIFFASAIPVISFGE. Residues 57 to 75 are Extracellular-facing; that stretch reads QLERSTDGVLTAVQTLAST. Residues 76-96 form a helical membrane-spanning segment; that stretch reads AICGMIHSIIGGQPLLILGVA. At 97-120 the chain is on the cytoplasmic side; the sequence is EPTVIMYTFMFNFAKARPELGRDL. Residues 121-141 form a helical membrane-spanning segment; the sequence is FLAWSGWVCVWTALMLFVLAI. Over 142 to 155 the chain is Extracellular; the sequence is CGACSIINRFTRVA. A helical membrane pass occupies residues 156 to 176; that stretch reads GELFGLLIAMLFMQQAIKGLV. Residues 177-195 are Cytoplasmic-facing; that stretch reads DEFRIPERENQKLKEFLPS. The helical transmembrane segment at 196-216 threads the bilayer; that stretch reads WRFANGMFALVLSFGLLLTGL. Residues 217 to 233 are Extracellular-facing; sequence RSRKARSWRYGTGWLRS. The helical transmembrane segment at 234 to 254 threads the bilayer; it reads LIADYGVPLMVLVWTGVSYIP. Topologically, residues 255–289 are cytoplasmic; the sequence is AGDVPKGIPRRLFSPNPWSPGAYGNWTVVKEMLDV. A helical membrane pass occupies residues 290–310; sequence PIVYIIGAFIPASMIAVLYYF. Over 311–337 the chain is Extracellular; it reads DHSVASQLAQQKEFNLRKPSSYHYDLL. The chain crosses the membrane as a helical span at residues 338–358; the sequence is LLGFLTLMCGLLGVPPSNGVI. Over 359–480 the chain is Cytoplasmic; sequence PQSPMHTKSL…STMVGGCVAA (122 aa). The helical transmembrane segment at 481-501 threads the bilayer; the sequence is MPILKMIPTSVLWGYFAFMAI. At 502–557 the chain is on the extracellular side; the sequence is ESLPGNQFWERILLLFTAPSRRFKVLEDYHATFVETVPFKTIAMFTLFQTTYLLIC. Residues 558-578 form a helical membrane-spanning segment; the sequence is FGLTWIPIAGVMFPLMIMFLI. At 579 to 704 the chain is on the cytoplasmic side; the sequence is PVRQYLLPRF…RSPLNQSSSN (126 aa). The tract at residues 641-704 is disordered; sequence EFRHTSSPKV…RSPLNQSSSN (64 aa). Positions 647 to 664 are enriched in low complexity; it reads SPKVTSSSSTPVNNRSLS.

It belongs to the anion exchanger (TC 2.A.31.3) family. Expressed in proximal side of various root cells, notably in the columella, lateral root cap, epidermis and endodermis in tip and elongation zones of the root. Also detected in the epidermis, cortex, endodermis, and stele cells of the root hair zone. Observed in cotyledons and hypocotyls.

It is found in the cell membrane. Its subcellular location is the endosome membrane. It localises to the vacuole membrane. Efflux-type boron (B) transporter for xylem loading, responsive of boron translocation from roots to shoots under boron limitation. Boron is essential for maintaining the integrity of plants cell walls. The protein is Boron transporter 1 of Arabidopsis thaliana (Mouse-ear cress).